A 348-amino-acid chain; its full sequence is Nitrogenase vanadium-iron protein beta chain (348 aa).

[8Fe-7S] cluster-binding residues include Cys-31, Cys-56, Cys-115, and Ser-153.

It belongs to the NifD/NifK/NifE/NifN family. In terms of assembly, hexamer of two alpha, two beta, and two delta chains. Requires [8Fe-7S] cluster as cofactor.

It catalyses the reaction N2 + 8 reduced [2Fe-2S]-[ferredoxin] + 16 ATP + 16 H2O = H2 + 8 oxidized [2Fe-2S]-[ferredoxin] + 2 NH4(+) + 16 ADP + 16 phosphate + 6 H(+). Functionally, this vanadium-iron protein is part of the nitrogenase complex that catalyzes the key enzymatic reactions in nitrogen fixation. This is Nitrogenase vanadium-iron protein beta chain (vnfK) from Azorhizophilus paspali (Azotobacter paspali).